The sequence spans 106 residues: Cytochrome c2 (106 aa).

Positions 19, 22, 23, and 84 each coordinate heme c.

Belongs to the cytochrome c family. In terms of processing, binds 1 heme c group covalently per subunit.

This Rhodopila globiformis (Rhodopseudomonas globiformis) protein is Cytochrome c2.